Reading from the N-terminus, the 455-residue chain is Chromosomal replication initiator protein DnaA (455 aa).

The tract at residues 1–74 (MFNFEKFWQH…IQSAYGYAGV (74 aa)) is domain I, interacts with DnaA modulators. The domain II stretch occupies residues 74–117 (VELLPVFQISEDSDTPERIVTPEPQHNLQTTPTRAPQREFAKDL). A domain III, AAA+ region region spans residues 118–334 (KLNEKYTFDN…GALVKVQAYA (217 aa)). Residues G162, G164, K165, and T166 each coordinate ATP. Residues 335–455 (TIEKADIDIN…VFDLKQMLEH (121 aa)) are domain IV, binds dsDNA.

Belongs to the DnaA family. As to quaternary structure, oligomerizes as a right-handed, spiral filament on DNA at oriC.

Its subcellular location is the cytoplasm. In terms of biological role, plays an essential role in the initiation and regulation of chromosomal replication. ATP-DnaA binds to the origin of replication (oriC) to initiate formation of the DNA replication initiation complex once per cell cycle. Binds the DnaA box (a 9 base pair repeat at the origin) and separates the double-stranded (ds)DNA. Forms a right-handed helical filament on oriC DNA; dsDNA binds to the exterior of the filament while single-stranded (ss)DNA is stabiized in the filament's interior. The ATP-DnaA-oriC complex binds and stabilizes one strand of the AT-rich DNA unwinding element (DUE), permitting loading of DNA polymerase. After initiation quickly degrades to an ADP-DnaA complex that is not apt for DNA replication. Binds acidic phospholipids. The protein is Chromosomal replication initiator protein DnaA of Lactobacillus acidophilus (strain ATCC 700396 / NCK56 / N2 / NCFM).